Consider the following 207-residue polypeptide: 8-oxoguanine DNA glycosylase/AP lyase (207 aa).

Active-site residues include K129 and D147.

Belongs to the type-2 OGG1 family.

The catalysed reaction is 2'-deoxyribonucleotide-(2'-deoxyribose 5'-phosphate)-2'-deoxyribonucleotide-DNA = a 3'-end 2'-deoxyribonucleotide-(2,3-dehydro-2,3-deoxyribose 5'-phosphate)-DNA + a 5'-end 5'-phospho-2'-deoxyribonucleoside-DNA + H(+). Functionally, catalyzes the excision of an oxidatively damaged form of guanine (7,8-dihydro-8-oxoguanine = 8-oxoG) from DNA. Also cleaves the DNA backbone at apurinic/apyrimidinic sites (AP sites). This Thermotoga sp. (strain RQ2) protein is 8-oxoguanine DNA glycosylase/AP lyase.